Here is a 196-residue protein sequence, read N- to C-terminus: dCTP deaminase (196 aa).

DCTP-binding positions include 113–118 (RSSLAR), D131, 139–141 (VLE), Y174, K181, and Q185. E141 functions as the Proton donor/acceptor in the catalytic mechanism.

This sequence belongs to the dCTP deaminase family. In terms of assembly, homotrimer.

The catalysed reaction is dCTP + H2O + H(+) = dUTP + NH4(+). It functions in the pathway pyrimidine metabolism; dUMP biosynthesis; dUMP from dCTP (dUTP route): step 1/2. In terms of biological role, catalyzes the deamination of dCTP to dUTP. This is dCTP deaminase from Wigglesworthia glossinidia brevipalpis.